A 173-amino-acid polypeptide reads, in one-letter code: Alpha-crystallin A chain (173 aa).

Residue Met1 is modified to N-acetylmethionine. Residues 1–63 (MDVTIQHPWF…RTVLDSGISE (63 aa)) are required for complex formation with BFSP1 and BFSP2. Position 6 is a deamidated glutamine; partial (Gln6). Ser45 bears the Phosphoserine mark. Gln50 is modified (deamidated glutamine; partial). The 111-residue stretch at 52 to 162 (LFRTVLDSGI…GHSERAIPVS (111 aa)) folds into the sHSP domain. An N6-acetyllysine mark is found at Lys70 and Lys99. Zn(2+) is bound at residue His100. Asn101 is subject to Deamidated asparagine; partial. Zn(2+) contacts are provided by Glu102 and His107. Ser122 bears the Phosphoserine mark. The residue at position 123 (Asn123) is a Deamidated asparagine; partial. Residues 145–173 (KVQSGLDAGHSERAIPVSREEKPSSAPSS) are disordered. The residue at position 147 (Gln147) is a Deamidated glutamine; partial. The span at 153–167 (GHSERAIPVSREEKP) shows a compositional bias: basic and acidic residues. His154 is a Zn(2+) binding site. A glycan (O-linked (GlcNAc) serine) is linked at Ser162.

It belongs to the small heat shock protein (HSP20) family. In terms of assembly, heteromer composed of three CRYAA and one CRYAB subunits. Inter-subunit bridging via zinc ions enhances stability, which is crucial as there is no protein turn over in the lens. Can also form homodimers and homotetramers (dimers of dimers) which serve as the building blocks of homooligomers. Within homooligomers, the zinc-binding motif is created from residues of 3 different molecules. His-100 and Glu-102 from one molecule are ligands of the zinc ion, and His-107 and His-154 residues from additional molecules complete the site with tetrahedral coordination geometry. Part of a complex required for lens intermediate filament formation composed of BFSP1, BFSP2 and CRYAA. Acetylation at Lys-70 may increase chaperone activity. In terms of processing, undergoes age-dependent proteolytical cleavage at the C-terminus.

Its subcellular location is the cytoplasm. The protein resides in the nucleus. Its function is as follows. Contributes to the transparency and refractive index of the lens. Acts as a chaperone, preventing aggregation of various proteins under a wide range of stress conditions. Required for the correct formation of lens intermediate filaments as part of a complex composed of BFSP1, BFSP2 and CRYAA. The protein is Alpha-crystallin A chain (CRYAA) of Meriones unguiculatus (Mongolian jird).